The primary structure comprises 238 residues: MSEVTTAEFNEEGKYLRKIRSFVLREGRLTKGQAQAIESQWPTMGLDYSPTPLVLSDVFGREADTVLEIGFGMGASLVQMAKDAPEQNFIGIEVHKPGVGSCLSDAAIAGVTNLRVYHHDAMEVLEHAIADGSLARVQLFFPDPWHKKRHHKRRIVQAEFAELIRRKLKIGGVFHMATDWEEYSEHMLEVMQAAPGYQNQSSDGTVVPRPDHRPLTKFEARGHRLGHGVWDLMFERIA.

S-adenosyl-L-methionine-binding residues include Glu-68, Glu-93, Asp-120, and Asp-143. Residue Asp-143 is part of the active site. Substrate-binding positions include Lys-147, Asp-179, and 216 to 219 (TKFE).

This sequence belongs to the class I-like SAM-binding methyltransferase superfamily. TrmB family.

It carries out the reaction guanosine(46) in tRNA + S-adenosyl-L-methionine = N(7)-methylguanosine(46) in tRNA + S-adenosyl-L-homocysteine. The protein operates within tRNA modification; N(7)-methylguanine-tRNA biosynthesis. Its function is as follows. Catalyzes the formation of N(7)-methylguanine at position 46 (m7G46) in tRNA. This is tRNA (guanine-N(7)-)-methyltransferase from Shewanella baltica (strain OS155 / ATCC BAA-1091).